A 240-amino-acid chain; its full sequence is UDP-2,3-diacylglucosamine hydrolase (240 aa).

Positions 7, 9, 40, 78, and 113 each coordinate Mn(2+). Residue 78–79 participates in substrate binding; it reads NR. 5 residues coordinate substrate: D121, S159, T163, K166, and H194. Positions 194 and 196 each coordinate Mn(2+).

Belongs to the LpxH family. Requires Mn(2+) as cofactor.

It localises to the cell inner membrane. It catalyses the reaction UDP-2-N,3-O-bis[(3R)-3-hydroxytetradecanoyl]-alpha-D-glucosamine + H2O = 2-N,3-O-bis[(3R)-3-hydroxytetradecanoyl]-alpha-D-glucosaminyl 1-phosphate + UMP + 2 H(+). The protein operates within glycolipid biosynthesis; lipid IV(A) biosynthesis; lipid IV(A) from (3R)-3-hydroxytetradecanoyl-[acyl-carrier-protein] and UDP-N-acetyl-alpha-D-glucosamine: step 4/6. Functionally, hydrolyzes the pyrophosphate bond of UDP-2,3-diacylglucosamine to yield 2,3-diacylglucosamine 1-phosphate (lipid X) and UMP by catalyzing the attack of water at the alpha-P atom. Involved in the biosynthesis of lipid A, a phosphorylated glycolipid that anchors the lipopolysaccharide to the outer membrane of the cell. The polypeptide is UDP-2,3-diacylglucosamine hydrolase (Stutzerimonas stutzeri (strain A1501) (Pseudomonas stutzeri)).